The chain runs to 488 residues: UDP-N-acetylmuramate--L-alanine ligase (488 aa).

Residue 122-128 participates in ATP binding; that stretch reads GTHGKTT.

It belongs to the MurCDEF family.

It is found in the cytoplasm. The enzyme catalyses UDP-N-acetyl-alpha-D-muramate + L-alanine + ATP = UDP-N-acetyl-alpha-D-muramoyl-L-alanine + ADP + phosphate + H(+). It functions in the pathway cell wall biogenesis; peptidoglycan biosynthesis. In terms of biological role, cell wall formation. The sequence is that of UDP-N-acetylmuramate--L-alanine ligase from Mycobacterium ulcerans (strain Agy99).